We begin with the raw amino-acid sequence, 141 residues long: Hemoglobin subunit alpha (141 aa).

The Globin domain occupies 1 to 141 (VLSAADKANV…VSTVLTSKYR (141 aa)). Ser-3 bears the Phosphoserine mark. N6-succinyllysine is present on residues Lys-7 and Lys-11. Lys-16 bears the N6-acetyllysine; alternate mark. N6-succinyllysine; alternate is present on Lys-16. Position 40 is an N6-succinyllysine (Lys-40). Ser-49 is modified (phosphoserine). His-58 serves as a coordination point for O2. Residue His-87 coordinates heme b. Ser-102 carries the phosphoserine modification. Thr-108 carries the post-translational modification Phosphothreonine. Residue Ser-124 is modified to Phosphoserine. Phosphothreonine occurs at positions 134 and 137. A Phosphoserine modification is found at Ser-138.

This sequence belongs to the globin family. As to quaternary structure, heterotetramer of two alpha chains and two beta chains. In terms of tissue distribution, red blood cells.

In terms of biological role, involved in oxygen transport from the lung to the various peripheral tissues. Hemopressin acts as an antagonist peptide of the cannabinoid receptor CNR1. Hemopressin-binding efficiently blocks cannabinoid receptor CNR1 and subsequent signaling. This is Hemoglobin subunit alpha (HBA) from Sus scrofa (Pig).